A 48-amino-acid polypeptide reads, in one-letter code: uncharacterized protein (48 aa).

The interval Met1–Gly20 is disordered.

This is an uncharacterized protein from Bacillus subtilis (strain 168).